The following is a 442-amino-acid chain: Microfibrillar-associated protein 1 (442 aa).

Disordered stretches follow at residues 1–34 (MSAP…YGEG) and 113–203 (EVVS…PRLK). Acidic residues-rich tracts occupy residues 134–148 (DTSE…DEEI) and 181–198 (ESEL…EDEM).

The protein belongs to the MFAP1 family. Component of the spliceosome B complex. Interacts with PRPF38A (via N-terminal interaction domain). In terms of tissue distribution, widely expressed.

The protein localises to the nucleus. Functionally, involved in pre-mRNA splicing as a component of the spliceosome. The sequence is that of Microfibrillar-associated protein 1 from Gallus gallus (Chicken).